The following is a 170-amino-acid chain: tRNA-splicing endonuclease (170 aa).

Active-site residues include Y110, H116, and K147.

The protein belongs to the tRNA-intron endonuclease family. Archaeal short subfamily. In terms of assembly, homotetramer; although the tetramer contains four active sites, only two participate in the cleavage. Therefore, it should be considered as a dimer of dimers.

It catalyses the reaction pretRNA = a 3'-half-tRNA molecule with a 5'-OH end + a 5'-half-tRNA molecule with a 2',3'-cyclic phosphate end + an intron with a 2',3'-cyclic phosphate and a 5'-hydroxyl terminus.. Endonuclease that removes tRNA introns. Cleaves pre-tRNA at the 5'- and 3'-splice sites to release the intron. The products are an intron and two tRNA half-molecules bearing 2',3' cyclic phosphate and 5'-OH termini. Recognizes a pseudosymmetric substrate in which 2 bulged loops of 3 bases are separated by a stem of 4 bp. This Pyrococcus horikoshii (strain ATCC 700860 / DSM 12428 / JCM 9974 / NBRC 100139 / OT-3) protein is tRNA-splicing endonuclease.